The chain runs to 674 residues: Primary amine oxidase (674 aa).

Positions 1–25 (MASTTTMRLALFSVLTLLSFHAVVS) are cleaved as a signal peptide. An N-linked (GlcNAc...) asparagine glycan is attached at N156. Cysteines 162 and 183 form a disulfide. Over residues 226–236 (ENTEYQVSKQS) the composition is skewed to polar residues. A disordered region spans residues 226–251 (ENTEYQVSKQSPPFGPKQHSLTSHQP). Residue 323–334 (FFDSGEFGFGLS) participates in substrate binding. Residue D325 is the Proton acceptor of the active site. The cysteines at positions 344 and 370 are disulfide-linked. N-linked (GlcNAc...) asparagine glycosylation occurs at N389. Residue 409–414 (VGNYDN) coordinates substrate. Y412 (schiff-base intermediate with substrate; via topaquinone) is an active-site residue. Y412 bears the 2',4',5'-topaquinone mark. The Cu cation site is built by H467 and H469. Mn(2+) contacts are provided by D476, F477, D478, D617, and I618. H628 contributes to the Cu cation binding site.

The protein belongs to the copper/topaquinone oxidase family. As to quaternary structure, homodimer. Cu cation serves as cofactor. It depends on Mn(2+) as a cofactor. Requires L-topaquinone as cofactor. Post-translationally, topaquinone (TPQ) is generated by copper-dependent autoxidation of a specific tyrosyl residue.

It carries out the reaction a primary methyl amine + O2 + H2O = an aldehyde + H2O2 + NH4(+). This is Primary amine oxidase from Pisum sativum (Garden pea).